The chain runs to 208 residues: Small ribosomal subunit protein eS8 (208 aa).

Residues 1-23 form a disordered region; that stretch reads MGISRDSAHKRRATGGKRKSLRK. A compositionally biased stretch (basic residues) spans 8-23; that stretch reads AHKRRATGGKRKSLRK.

It belongs to the eukaryotic ribosomal protein eS8 family. As to quaternary structure, component of the small ribosomal subunit. Identified in a IGF2BP1-dependent mRNP granule complex containing untranslated mRNAs. Part of the small subunit (SSU) processome, composed of more than 70 proteins and the RNA chaperone small nucleolar RNA (snoRNA) U3.

The protein resides in the cytoplasm. The protein localises to the membrane. It localises to the nucleus. It is found in the nucleolus. Its function is as follows. Component of the small ribosomal subunit. The ribosome is a large ribonucleoprotein complex responsible for the synthesis of proteins in the cell. Part of the small subunit (SSU) processome, first precursor of the small eukaryotic ribosomal subunit. During the assembly of the SSU processome in the nucleolus, many ribosome biogenesis factors, an RNA chaperone and ribosomal proteins associate with the nascent pre-rRNA and work in concert to generate RNA folding, modifications, rearrangements and cleavage as well as targeted degradation of pre-ribosomal RNA by the RNA exosome. The sequence is that of Small ribosomal subunit protein eS8 (RpS8) from Drosophila melanogaster (Fruit fly).